Reading from the N-terminus, the 403-residue chain is F-box protein At2g40925 (403 aa).

The 51-residue stretch at 21 to 71 (NRHDCEIPPDLMIEILIRLPTKSFMRFKCVSKQWSPLISGRYFCNRLFTCV) folds into the F-box domain.

The chain is F-box protein At2g40925 from Arabidopsis thaliana (Mouse-ear cress).